Consider the following 514-residue polypeptide: Cilia- and flagella-associated protein 53 (514 aa).

Coiled coils occupy residues 91–176 and 205–478; these read VINT…EKKV and WEED…AGLA. Disordered stretches follow at residues 261–296 and 495–514; these read QNKA…QDKI and QALS…KPPL.

It belongs to the CFAP53 family. As to quaternary structure, microtubule inner protein component of sperm flagellar doublet microtubules. Interacts with PIERCE1 and PIERCE2; the interactions link outer dynein arms docking complex (ODA-DC) to the internal microtubule inner proteins (MIP) in cilium axoneme. Interacts with CCDC38. Interacts with CCDC42 and IFT88. Interacts with centriolar satellite proteins PIBF1/CEP90 and PCM1. Interacts with dyneins DNAIC1, DNAIC2 AND DNAH11 and with ODA-DC component ODAD4/TTC25. In terms of tissue distribution, expressed predominantly in testis (at protein level). In embryos at 8 dpc, specifically expressed in the node, in particular within the pit cells that are located at the center of the node and have rotating monocilia on their apical surface. In the adult, expressed in epithelial cells of the trachea, brain ventricles, oviduct and testis.

The protein resides in the cytoplasm. Its subcellular location is the cytoskeleton. It is found in the cilium axoneme. The protein localises to the flagellum axoneme. It localises to the microtubule organizing center. The protein resides in the centrosome. Its subcellular location is the centriolar satellite. It is found in the spindle pole. Functionally, microtubule inner protein (MIP) part of the dynein-decorated doublet microtubules (DMTs) in cilia axoneme, which is required for motile cilia beating. Regulates motility patterns of both 9+0 and 9+2 motile cilia through differential localization and recruitment of axonemal dynein components. Required for centriolar satellite integrity and non-motile cilium assembly. Required for motile cilium formation. Through its role in the beating of primary cilia, involved in the establishment of organ laterality during embryogenesis. Required for sperm flagellum biogenesis and is essential for male fertility. In Mus musculus (Mouse), this protein is Cilia- and flagella-associated protein 53.